A 278-amino-acid chain; its full sequence is Ribosomal RNA small subunit methyltransferase A (278 aa).

The S-adenosyl-L-methionine site is built by Asn28, Leu30, Gly55, Glu77, Asp103, and Asn122.

Belongs to the class I-like SAM-binding methyltransferase superfamily. rRNA adenine N(6)-methyltransferase family. RsmA subfamily.

The protein localises to the cytoplasm. It carries out the reaction adenosine(1518)/adenosine(1519) in 16S rRNA + 4 S-adenosyl-L-methionine = N(6)-dimethyladenosine(1518)/N(6)-dimethyladenosine(1519) in 16S rRNA + 4 S-adenosyl-L-homocysteine + 4 H(+). Specifically dimethylates two adjacent adenosines (A1518 and A1519) in the loop of a conserved hairpin near the 3'-end of 16S rRNA in the 30S particle. May play a critical role in biogenesis of 30S subunits. The sequence is that of Ribosomal RNA small subunit methyltransferase A from Cereibacter sphaeroides (strain ATCC 17025 / ATH 2.4.3) (Rhodobacter sphaeroides).